The primary structure comprises 104 residues: Large ribosomal subunit protein uL23 (104 aa).

The protein belongs to the universal ribosomal protein uL23 family. As to quaternary structure, part of the 50S ribosomal subunit. Contacts protein L29, and trigger factor when it is bound to the ribosome.

In terms of biological role, one of the early assembly proteins it binds 23S rRNA. One of the proteins that surrounds the polypeptide exit tunnel on the outside of the ribosome. Forms the main docking site for trigger factor binding to the ribosome. This chain is Large ribosomal subunit protein uL23, found in Burkholderia multivorans (strain ATCC 17616 / 249).